Consider the following 360-residue polypeptide: tRNA-specific 2-thiouridylase MnmA (360 aa).

Residues 9–16 (AMSGGVDS) and Leu35 contribute to the ATP site. The active-site Nucleophile is the Cys104. A disulfide bridge connects residues Cys104 and Cys197. Position 128 (Gly128) interacts with ATP. The segment at 147-149 (KDQ) is interaction with tRNA. The active-site Cysteine persulfide intermediate is Cys197.

The protein belongs to the MnmA/TRMU family.

Its subcellular location is the cytoplasm. The enzyme catalyses S-sulfanyl-L-cysteinyl-[protein] + uridine(34) in tRNA + AH2 + ATP = 2-thiouridine(34) in tRNA + L-cysteinyl-[protein] + A + AMP + diphosphate + H(+). Catalyzes the 2-thiolation of uridine at the wobble position (U34) of tRNA, leading to the formation of s(2)U34. The protein is tRNA-specific 2-thiouridylase MnmA of Salinispora arenicola (strain CNS-205).